Reading from the N-terminus, the 461-residue chain is Diaboline synthase (461 aa).

Catalysis depends on proton acceptor residues histidine 185 and aspartate 400.

Belongs to the plant acyltransferase family. Monomer.

It is found in the cytoplasm. It carries out the reaction 17,18-epoxy-17-hydroxycur-19-ene + acetyl-CoA = diaboline + CoA. It functions in the pathway alkaloid biosynthesis. In terms of biological role, acetyltransferase involved in the biosynthesis of curare monoterpene indole alkaloids (MIAs), natural products such as diaboline, a pharmacologically active compound used to regulate blood pressure. Curare alkaloids act as animal glycine receptor antagonists. Catalyzes the conversion of 17,18-epoxy-17-hydroxycur-19-ene (Wieland-Gumlich aldehyde) to diaboline. The sequence is that of Diaboline synthase from Strychnos sp.